Here is a 164-residue protein sequence, read N- to C-terminus: Protein SprT (164 aa).

In terms of domain architecture, SprT-like spans 14-156 (QQAETFFKRP…LCKRCRAILV (143 aa)). A Zn(2+)-binding site is contributed by His-69. Glu-70 is an active-site residue. His-73 contacts Zn(2+).

This sequence belongs to the SprT family. Requires Zn(2+) as cofactor.

It is found in the cytoplasm. The polypeptide is Protein SprT (Pseudomonas putida (strain GB-1)).